The sequence spans 1370 residues: DNA-directed RNA polymerase subunit beta (1370 aa).

Belongs to the RNA polymerase beta chain family. In terms of assembly, the RNAP catalytic core consists of 2 alpha, 1 beta, 1 beta' and 1 omega subunit. When a sigma factor is associated with the core the holoenzyme is formed, which can initiate transcription.

It catalyses the reaction RNA(n) + a ribonucleoside 5'-triphosphate = RNA(n+1) + diphosphate. DNA-dependent RNA polymerase catalyzes the transcription of DNA into RNA using the four ribonucleoside triphosphates as substrates. The chain is DNA-directed RNA polymerase subunit beta from Bordetella parapertussis (strain 12822 / ATCC BAA-587 / NCTC 13253).